The sequence spans 279 residues: Small ribosomal subunit protein uS9m (279 aa).

This sequence belongs to the universal ribosomal protein uS9 family.

Its subcellular location is the mitochondrion. The polypeptide is Small ribosomal subunit protein uS9m (MRPS9) (Eremothecium gossypii (strain ATCC 10895 / CBS 109.51 / FGSC 9923 / NRRL Y-1056) (Yeast)).